Here is a 643-residue protein sequence, read N- to C-terminus: Inorganic pyrophosphatase TTM1 (643 aa).

The N-terminal 15 residues, 1-15, are a transit peptide targeting the mitochondrion; that stretch reads MALDSSVALSPRRRH. Residues 248-410 form the CYTH domain; sequence NPTYILKSSK…PHTYIEQIQL (163 aa). The chain crosses the membrane as a helical span at residues 618–638; that stretch reads LESSTVPILLGLAIGCVGIFA.

Requires Mg(2+) as cofactor. In terms of tissue distribution, ubiquitously expressed in all tissues, with strong expression detected in senescent leaves.

It localises to the mitochondrion outer membrane. It carries out the reaction diphosphate + H2O = 2 phosphate + H(+). Its function is as follows. Exhibits pyrophosphatase activity with stronger affinity for pyrophosphate (PPi), moderate affinity for ATP and ADP, and weak affinity for tripolyphosphate (PPPi). No activity observed toward uridine substrate. Positively regulates natural and dark-induced leaf senescence. This chain is Inorganic pyrophosphatase TTM1, found in Arabidopsis thaliana (Mouse-ear cress).